Consider the following 618-residue polypeptide: DNA mismatch repair protein MutL (618 aa).

The interval 367–402 (EPTTAREPATPRYSGGASGGNGGRQTAGGWPHAQPG) is disordered. Gly residues predominate over residues 382–392 (GASGGNGGRQT).

This sequence belongs to the DNA mismatch repair MutL/HexB family.

Its function is as follows. This protein is involved in the repair of mismatches in DNA. It is required for dam-dependent methyl-directed DNA mismatch repair. May act as a 'molecular matchmaker', a protein that promotes the formation of a stable complex between two or more DNA-binding proteins in an ATP-dependent manner without itself being part of a final effector complex. The polypeptide is DNA mismatch repair protein MutL (Salmonella paratyphi A (strain ATCC 9150 / SARB42)).